The chain runs to 306 residues: UDP-3-O-acyl-N-acetylglucosamine deacetylase (306 aa).

Residues His-79, His-239, and Asp-243 each coordinate Zn(2+). His-266 functions as the Proton donor in the catalytic mechanism.

It belongs to the LpxC family. Zn(2+) serves as cofactor.

The enzyme catalyses a UDP-3-O-[(3R)-3-hydroxyacyl]-N-acetyl-alpha-D-glucosamine + H2O = a UDP-3-O-[(3R)-3-hydroxyacyl]-alpha-D-glucosamine + acetate. The protein operates within glycolipid biosynthesis; lipid IV(A) biosynthesis; lipid IV(A) from (3R)-3-hydroxytetradecanoyl-[acyl-carrier-protein] and UDP-N-acetyl-alpha-D-glucosamine: step 2/6. In terms of biological role, catalyzes the hydrolysis of UDP-3-O-myristoyl-N-acetylglucosamine to form UDP-3-O-myristoylglucosamine and acetate, the committed step in lipid A biosynthesis. This is UDP-3-O-acyl-N-acetylglucosamine deacetylase from Actinobacillus pleuropneumoniae serotype 7 (strain AP76).